Consider the following 190-residue polypeptide: Orotate phosphoribosyltransferase (190 aa).

5-phospho-alpha-D-ribose 1-diphosphate contacts are provided by residues R101, K102, K105, H107, and 128–136; that span reads EDVVTTGGS. Orotate contacts are provided by T132 and R160.

It belongs to the purine/pyrimidine phosphoribosyltransferase family. PyrE subfamily. In terms of assembly, homodimer. The cofactor is Mg(2+).

The catalysed reaction is orotidine 5'-phosphate + diphosphate = orotate + 5-phospho-alpha-D-ribose 1-diphosphate. It participates in pyrimidine metabolism; UMP biosynthesis via de novo pathway; UMP from orotate: step 1/2. In terms of biological role, catalyzes the transfer of a ribosyl phosphate group from 5-phosphoribose 1-diphosphate to orotate, leading to the formation of orotidine monophosphate (OMP). The chain is Orotate phosphoribosyltransferase from Synechococcus sp. (strain CC9605).